A 352-amino-acid chain; its full sequence is Outer membrane protein assembly factor BamC (352 aa).

Positions 1-19 (MQYWIPKALAVSVLVSLSG) are cleaved as a signal peptide. A lipid anchor (N-palmitoyl cysteine) is attached at C20. C20 carries the S-diacylglycerol cysteine lipid modification.

The protein belongs to the BamC family. Part of the Bam complex.

The protein resides in the cell outer membrane. In terms of biological role, part of the outer membrane protein assembly complex, which is involved in assembly and insertion of beta-barrel proteins into the outer membrane. The sequence is that of Outer membrane protein assembly factor BamC from Pseudoalteromonas sp. (strain SM9913).